A 364-amino-acid chain; its full sequence is Long-wave-sensitive opsin 1 (364 aa).

Residues 1-52 (MAHTWGPQRLAGGQPQANFEESTQGSIFTYTNSNSTRDPFEGPNYHIAPRWV) lie on the Extracellular side of the membrane. Ser-22 is a glycosylation site (O-linked (GlcNAc) serine). N-linked (GlcNAc...) asparagine glycosylation occurs at Asn-34. The helical transmembrane segment at 53–77 (YHLTSAWMVFVVIASVFTNGLVLAA) threads the bilayer. Over 78 to 89 (TMRFKKLRHPLN) the chain is Cytoplasmic. A helical transmembrane segment spans residues 90–115 (WILVNLAIADLAETIIASTISVVNQM). Residues 116-129 (YGYFVLGHPLCVVE) lie on the Extracellular side of the membrane. Cys-126 and Cys-203 are oxidised to a cystine. The helical transmembrane segment at 130 to 149 (GYTVSLCGITGLWSLAIISW) threads the bilayer. At 150–168 (ERWMVVCKPFGNVRFDAKL) the chain is on the cytoplasmic side. The chain crosses the membrane as a helical span at residues 169-192 (ATAGIAFSWIWAAVWTAPPIFGWS). The Extracellular portion of the chain corresponds to 193–218 (RYWPHGLKTSCGPDVFSGSSYPGVQS). The helical transmembrane segment at 219 to 246 (YMIVLMITCCFIPLSVIILCYLQVWLAI) threads the bilayer. At 247–268 (RAVAKQQKESESTQKAEKEVTR) the chain is on the cytoplasmic side. Residues 269–292 (MVMVMIFAYCLCWGPYTFFACFAA) traverse the membrane as a helical segment. Topologically, residues 293–300 (AHPGYAFH) are extracellular. Residues 301–325 (PLVAALPAYFAKSATIYNPIIYVFM) traverse the membrane as a helical segment. N6-(retinylidene)lysine is present on Lys-312. Topologically, residues 326–364 (NRQFRNCILQLFGKKVDDSSELSSVSKTEASSVSSVSPA) are cytoplasmic.

Belongs to the G-protein coupled receptor 1 family. Opsin subfamily. In terms of processing, phosphorylated on some or all of the serine and threonine residues present in the C-terminal region. As to expression, the three color pigments are found in the cone photoreceptor cells.

The protein localises to the membrane. In terms of biological role, visual pigments are the light-absorbing molecules that mediate vision. They consist of an apoprotein, opsin, covalently linked to cis-retinal. The polypeptide is Long-wave-sensitive opsin 1 (OPN1LW) (Capra hircus (Goat)).